Reading from the N-terminus, the 83-residue chain is Acyl carrier protein (83 aa).

The Carrier domain occupies 2–77 (NEILSKIKSI…DANQYIKKYL (76 aa)). Serine 37 is modified (O-(pantetheine 4'-phosphoryl)serine).

It belongs to the acyl carrier protein (ACP) family. 4'-phosphopantetheine is transferred from CoA to a specific serine of apo-ACP by AcpS. This modification is essential for activity because fatty acids are bound in thioester linkage to the sulfhydryl of the prosthetic group.

The protein resides in the cytoplasm. Its pathway is lipid metabolism; fatty acid biosynthesis. Carrier of the growing fatty acid chain in fatty acid biosynthesis. This is Acyl carrier protein from Karelsulcia muelleri (strain GWSS) (Sulcia muelleri).